Reading from the N-terminus, the 710-residue chain is Methionine--tRNA ligase (710 aa).

The short motif at 26–36 (PYANGQIHIGH) is the 'HIGH' region element. Zn(2+) contacts are provided by C157, C160, C170, and C173. The 'KMSKS' region signature appears at 347–351 (KMSKS). K350 lines the ATP pocket. Residues 604 to 710 (DFAKIDLRIA…SGAKPGMRVK (107 aa)) enclose the tRNA-binding domain.

The protein belongs to the class-I aminoacyl-tRNA synthetase family. MetG type 1 subfamily. Homodimer. The cofactor is Zn(2+).

The protein resides in the cytoplasm. The catalysed reaction is tRNA(Met) + L-methionine + ATP = L-methionyl-tRNA(Met) + AMP + diphosphate. In terms of biological role, is required not only for elongation of protein synthesis but also for the initiation of all mRNA translation through initiator tRNA(fMet) aminoacylation. In Paraburkholderia xenovorans (strain LB400), this protein is Methionine--tRNA ligase.